The following is a 124-amino-acid chain: WAP four-disulfide core domain protein 2 (124 aa).

The signal sequence occupies residues 1–27 (MPACRPGPLAGALLLGLLLLGLPRVPG). 2 WAP domains span residues 29 to 73 (EVEK…CHLP) and 74 to 123 (NEKE…VTPI). Intrachain disulfides connect cysteine 36–cysteine 62, cysteine 45–cysteine 66, cysteine 49–cysteine 61, cysteine 55–cysteine 70, cysteine 80–cysteine 110, cysteine 93–cysteine 114, cysteine 97–cysteine 109, and cysteine 103–cysteine 119. N-linked (GlcNAc...) asparagine glycosylation is present at asparagine 44.

As to quaternary structure, homotrimer; disulfide-linked. Epididymis. Highest levels are found in the caput and proximal cauda regions. Lower levels in the distal cauda. Not detected in the efferent ducts.

The protein localises to the secreted. In terms of biological role, broad range protease inhibitor. Possible function in sperm maturation. This Canis lupus familiaris (Dog) protein is WAP four-disulfide core domain protein 2 (WFDC2).